The primary structure comprises 637 residues: Phospholipase B (637 aa).

Residues 1–19 (MSIITTAFALSLLATTAFA) form the signal peptide. In terms of domain architecture, PLA2c spans 46–572 (DCPSNVTWIR…DTWCWAGDDN (527 aa)). Residues Asn50, Asn56, Asn122, Asn231, Asn246, Asn272, Asn314, Asn343, Asn387, Asn433, Asn481, Asn501, Asn528, Asn553, Asn572, Asn594, and Asn606 are each glycosylated (N-linked (GlcNAc...) asparagine).

The protein belongs to the lysophospholipase family. Post-translationally, N-glycosylated.

The protein resides in the secreted. The enzyme catalyses a 1-acyl-sn-glycero-3-phosphocholine + H2O = sn-glycerol 3-phosphocholine + a fatty acid + H(+). Functionally, exhibits phospholipase B (PLB), lysophospholipase (LPL) and lysophospholipase/transacylase (LPTA) activities. The sequence is that of Phospholipase B (PLB1) from Cryptococcus neoformans var. neoformans serotype D (strain B-3501A) (Filobasidiella neoformans).